The sequence spans 113 residues: UPF0145 protein TK1926 (113 aa).

Belongs to the UPF0145 family.

The protein is UPF0145 protein TK1926 of Thermococcus kodakarensis (strain ATCC BAA-918 / JCM 12380 / KOD1) (Pyrococcus kodakaraensis (strain KOD1)).